The chain runs to 932 residues: UPF0182 protein Dred_1797 (932 aa).

Helical transmembrane passes span 11-31 (LVIL…GLYI), 53-73 (IGLR…NLML), 118-138 (LTLA…SSVA), 180-200 (ILAS…LVTD), 209-229 (IFRF…FFVI), 264-284 (YKAL…NIFL), and 292-312 (YAIG…PAII). The tract at residues 861 to 883 (DRPQQGVPPATDQPAGQQPAPEK) is disordered.

The protein belongs to the UPF0182 family.

Its subcellular location is the cell membrane. The polypeptide is UPF0182 protein Dred_1797 (Desulforamulus reducens (strain ATCC BAA-1160 / DSM 100696 / MI-1) (Desulfotomaculum reducens)).